The sequence spans 285 residues: Small ribosomal subunit protein uS2 (285 aa).

Residues 229–285 (RHNGKSNAAEEPMAEWERELLEQHEEQKSQDAAPAEQSAPAAEAPAETEQKDAPAAE) form a disordered region. Basic and acidic residues predominate over residues 243-257 (EWERELLEQHEEQKS). A compositionally biased stretch (low complexity) spans 260 to 275 (AAPAEQSAPAAEAPAE). The span at 276–285 (TEQKDAPAAE) shows a compositional bias: basic and acidic residues.

The protein belongs to the universal ribosomal protein uS2 family.

This Kocuria rhizophila (strain ATCC 9341 / DSM 348 / NBRC 103217 / DC2201) protein is Small ribosomal subunit protein uS2.